A 315-amino-acid chain; its full sequence is 2-oxoglutarate and iron-dependent oxygenase domain-containing protein 3 (315 aa).

Positions 1-31 (MAPQRRGPPRIPEGSSAAERRRATSTKKDRL) are disordered. Topologically, residues 1–41 (MAPQRRGPPRIPEGSSAAERRRATSTKKDRLPREAQRTWLR) are cytoplasmic. Positions 18–31 (AERRRATSTKKDRL) are enriched in basic and acidic residues. Residues 42–62 (IVAFGVGLALVTCLLWSSVGI) form a helical; Signal-anchor for type II membrane protein membrane-spanning segment. At 63–315 (DDDVAEVVAR…DHGIEDPVLT (253 aa)) the chain is on the lumenal side. The Fe2OG dioxygenase domain occupies 203 to 305 (KPTFFSRINS…AITIAFTCNP (103 aa)). N-linked (GlcNAc...) asparagine glycosylation occurs at asparagine 211. The Fe cation site is built by histidine 226 and aspartate 228. N-linked (GlcNAc...) asparagine glycosylation occurs at asparagine 263. Histidine 284 contributes to the Fe cation binding site. Arginine 294 is an active-site residue. 2-oxoglutarate is bound at residue arginine 294.

The protein belongs to the OGFOD3 family. Fe(2+) is required as a cofactor. The cofactor is L-ascorbate.

It is found in the membrane. The chain is 2-oxoglutarate and iron-dependent oxygenase domain-containing protein 3 (Ogfod3) from Mus musculus (Mouse).